The sequence spans 187 residues: GTP cyclohydrolase 1 (187 aa).

Zn(2+)-binding residues include C76, H79, and C148.

It belongs to the GTP cyclohydrolase I family. In terms of assembly, toroid-shaped homodecamer, composed of two pentamers of five dimers.

The catalysed reaction is GTP + H2O = 7,8-dihydroneopterin 3'-triphosphate + formate + H(+). It participates in cofactor biosynthesis; 7,8-dihydroneopterin triphosphate biosynthesis; 7,8-dihydroneopterin triphosphate from GTP: step 1/1. The protein is GTP cyclohydrolase 1 of Streptococcus agalactiae serotype Ia (strain ATCC 27591 / A909 / CDC SS700).